Here is a 513-residue protein sequence, read N- to C-terminus: MMNKDMLLHQHQQPQQDENMSNLTSASGDQASVSSGNITEASGSNYFPHHQQQQEQQQQQLVVPDSQTQKKRRNQPGNPDPESEVIALSPKTLMATNRFVCEICNKGFQRDQNLQLHRRGHNLPWKLKQRSNKEVIRKKVYVCPEASCVHHDPSRALGDLTGIKKHFCRKHGEKKWKCDKCSKKYAVQSDCKAHSKTCGTKEYRCDCGTLFSRRDSFITHRAFCEALAEETAREVVIPQNQNNNQPNPLLIHQSASHPHHHHQTQPTINVSSSSSSSHNHNIINSLHFDTNNGNTNNSNNSNNHLHTFPMKKEQQSNDHIMNYHHSIIPPWLAPQPHALTSSNPNPSNGGGGGGSLFSLASPAMSATALLQKAAQMGSTKTPPLPPTTAYERSTHNNNLTTTMAAMMTSPSGFISSNNNNHVLFQDYNASGFDNHGREEAFDDTFGGFLRTNEVTAAAGSEKSTKSGGGEGLTRDFLGLRPLMSHNEILSFAGLGSCINSSASDQLHPKPWQG.

Positions 1–84 (MMNKDMLLHQ…QPGNPDPESE (84 aa)) are disordered. A compositionally biased stretch (polar residues) spans 10–45 (QHQQPQQDENMSNLTSASGDQASVSSGNITEASGSN). Low complexity predominate over residues 51–60 (QQQQEQQQQQ). Position 89 is a phosphoserine (serine 89). 2 C2H2-type zinc fingers span residues 99-121 (FVCE…RRGH) and 141-171 (YVCP…CRKH). The short motif at 163–170 (IKKHFCRK) is the Nuclear localization signal element. Residues 176-199 (WKCDKCSKKYAVQSDCKAHSKTCG) form a C2H2-type 2; degenerate zinc finger. Cysteine 178, cysteine 181, histidine 194, cysteine 198, cysteine 205, cysteine 207, histidine 220, and cysteine 224 together coordinate Zn(2+). A CCHC-type 2; atypical zinc finger spans residues 203 to 226 (YRCDCGTLFSRRDSFITHRAFCEA). Residues 213 to 225 (RRDSFITHRAFCE) form an SHR-binding region. Disordered regions lie at residues 255–280 (ASHP…SHNH) and 334–358 (PQPH…SLFS). Low complexity predominate over residues 264-280 (TQPTINVSSSSSSSHNH).

It localises to the nucleus. Functionally, probable transcription factor. In Arabidopsis thaliana (Mouse-ear cress), this protein is Protein indeterminate-domain 11.